The following is a 138-amino-acid chain: Large ribosomal subunit protein uL16 (138 aa).

The protein belongs to the universal ribosomal protein uL16 family. As to quaternary structure, part of the 50S ribosomal subunit.

Functionally, binds 23S rRNA and is also seen to make contacts with the A and possibly P site tRNAs. The chain is Large ribosomal subunit protein uL16 from Rubrobacter xylanophilus (strain DSM 9941 / JCM 11954 / NBRC 16129 / PRD-1).